Reading from the N-terminus, the 284-residue chain is Acetylglutamate kinase (284 aa).

Substrate is bound by residues 64–65 (GG), Arg-86, and Asn-179.

Belongs to the acetylglutamate kinase family. ArgB subfamily.

It is found in the cytoplasm. It catalyses the reaction N-acetyl-L-glutamate + ATP = N-acetyl-L-glutamyl 5-phosphate + ADP. It participates in amino-acid biosynthesis; L-arginine biosynthesis; N(2)-acetyl-L-ornithine from L-glutamate: step 2/4. In terms of biological role, catalyzes the ATP-dependent phosphorylation of N-acetyl-L-glutamate. The protein is Acetylglutamate kinase of Acaryochloris marina (strain MBIC 11017).